We begin with the raw amino-acid sequence, 313 residues long: Formate-nitrite transporter (313 aa).

Over methionine 1–alanine 46 the chain is Cytoplasmic. Residues isoleucine 47–phenylalanine 67 traverse the membrane as a helical segment. Residues tyrosine 68 to glycine 77 are Extracellular-facing. Residues isoleucine 78–alanine 98 form a helical membrane-spanning segment. Residues threonine 99–arginine 127 lie on the Cytoplasmic side of the membrane. A helical membrane pass occupies residues valine 128–serine 148. At histidine 149–cysteine 184 the chain is on the extracellular side. A helical transmembrane segment spans residues valine 185–isoleucine 205. Residues lysine 206–glycine 210 lie on the Cytoplasmic side of the membrane. Residues methionine 211–isoleucine 231 traverse the membrane as a helical segment. Over alanine 232–asparagine 256 the chain is Extracellular. The chain crosses the membrane as a helical span at residues leucine 257–phenylalanine 277. Topologically, residues tyrosine 278–arginine 313 are cytoplasmic. The disordered stretch occupies residues threonine 290–arginine 313. Polar residues predominate over residues glycine 298–arginine 313.

This sequence belongs to the FNT transporter (TC 1.A.16) family. Homopentamer.

Its subcellular location is the cell membrane. The protein localises to the vacuole membrane. The catalysed reaction is (S)-lactate(in) + H(+)(in) = (S)-lactate(out) + H(+)(out). It catalyses the reaction formate(in) + H(+)(in) = formate(out) + H(+)(out). It carries out the reaction pyruvate(out) + H(+)(out) = pyruvate(in) + H(+)(in). The enzyme catalyses acetate(out) + H(+)(out) = acetate(in) + H(+)(in). Inhibited by the Malaria Box compound MMV007839 and its derivatives BH296 and BH267.meta. Monocarboxylate-proton symporter that mediates the efflux of the waste product lactate in the intraerythrocytic parasites; active in acidic-to-neutral pH range. Transports L-lactate. In Plasmodium vivax, this protein is Formate-nitrite transporter.